A 248-amino-acid polypeptide reads, in one-letter code: MRKAIIAGNWKMNKTIDEAVKMVEELKPLVKDATCDVVVCPTFVCLDAVKKAVAGSNIKVAAQNMHFEESGAFTGEVAPGMLEAMGIDYVVLGHSERREYFNETDEALNKKVKKAFEHNITPILCCGESLEQRENGTTNKVIEAQIKADIAGLTNEQVEKLVIAYEPIWAIGTGKTATDEQANETIKAIRAMVAEMYGSESAEKTRIQYGGSVKPNTIKAQMEMSDIDGALVGGASLVPADFAAIVNY.

9–11 (NWK) contributes to the substrate binding site. Residue H94 is the Electrophile of the active site. Residue E166 is the Proton acceptor of the active site. Residues G172, S212, and 233 to 234 (GG) contribute to the substrate site.

This sequence belongs to the triosephosphate isomerase family. As to quaternary structure, homodimer.

The protein localises to the cytoplasm. It catalyses the reaction D-glyceraldehyde 3-phosphate = dihydroxyacetone phosphate. The protein operates within carbohydrate biosynthesis; gluconeogenesis. It functions in the pathway carbohydrate degradation; glycolysis; D-glyceraldehyde 3-phosphate from glycerone phosphate: step 1/1. Its function is as follows. Involved in the gluconeogenesis. Catalyzes stereospecifically the conversion of dihydroxyacetone phosphate (DHAP) to D-glyceraldehyde-3-phosphate (G3P). In Clostridium beijerinckii (strain ATCC 51743 / NCIMB 8052) (Clostridium acetobutylicum), this protein is Triosephosphate isomerase.